Here is a 274-residue protein sequence, read N- to C-terminus: MPFVTASDGTEIFYKDWGSGRPIMFHHGWPLSSDDWDSQLLFLVQRGYRVIAHDRRGHGRSAQVGHGHDMDHYAADAAAVVAHLGLRDVVHVGHSTGGGEVARYVARHGAGRVAKAVLIGAVPPLMVQTESNPEGLPVEVFDGFREAVVTNRSQFYLDLASGPFYGFNRPGADISQGVIQNWWRQGMTGSAQAHYEGIKAFSETDFTDDLRAIDVPTLIMHGDDDQIVPIANSAETAVTLVKNARLKVYPGLSHGMCTVNADTVNADLLSFIES.

An AB hydrolase-1 domain is found at 22 to 254 (PIMFHHGWPL…RLKVYPGLSH (233 aa)). Catalysis depends on residues serine 95, aspartate 225, and histidine 254.

It belongs to the AB hydrolase superfamily. Bacterial non-heme haloperoxidase / perhydrolase family.

The sequence is that of Non-heme haloperoxidase (thcF) from Rhodococcus erythropolis (Arthrobacter picolinophilus).